The chain runs to 203 residues: Cupin-domain-containing oxidoreductase fogC (203 aa).

The cupin-like domain stretch occupies residues 105–171 (DFAPGVESPL…GNGTLPGRML (67 aa)).

This sequence belongs to the virC family.

It participates in secondary metabolite biosynthesis. Functionally, cupin-domain-containing oxidoreductase; part of the gene cluster that mediates the biosynthesis of flavoglaucin and congeners (including aspergin, dihydroauroglaucin and auroglaucin), prenylated salicylaldehyde derivatives carrying a saturated or an unsaturated C-7 side chain. The PKS fogA releases the carboxylic acid (8E,10E,12E)-3,5,7-trihydroxytetradeca-8,10,12-trienoic acid as its product, as well as derivatives with one and two double bonds. FogA is indeed able to reduce the initial triketide, thus being at least partially responsible for the differently saturated heptyl side chains of flavoglaucin congeners. The oxidoreductases fogB, fogC and fogD modify the nascent polyketide in fogA-bound form and, together, fogA, fogB, fogC and fogD are necessary for the formation of the aromatic core and the cyclized PKS products are released as salicyl alcohols. In particular, fogB is responsible for oxidation of a hydroxyl group or reduction of remaining double bond(s) at the C-7 residue whereas fogD is probably involved in the reductive release of the modified PKS products. The cytochrome P450 monooxygenase fogE is then responsible for the hydroxylation at C-3 of the benzene ring. The fogE products are substrates of the prenyltransferase fogH and the prenylated benzyl alcohols are subsequently oxidized by the fogF to produce the final aryl aldehydes flavoglaucin and congeners. The short-chain dehydrogenase fogG does not seem to be involved in the biosynthesis of the prenylated salicylaldehyde derivatives. The protein is Cupin-domain-containing oxidoreductase fogC of Aspergillus ruber (strain CBS 135680).